We begin with the raw amino-acid sequence, 400 residues long: Phosphoglycerate kinase (400 aa).

Residues 20–22 (DLN), Arg-35, 58–61 (HQGR), Arg-115, and Arg-155 contribute to the substrate site. Residues Glu-330 and 356–359 (GGDT) contribute to the ATP site.

It belongs to the phosphoglycerate kinase family. As to quaternary structure, monomer.

It is found in the cytoplasm. It carries out the reaction (2R)-3-phosphoglycerate + ATP = (2R)-3-phospho-glyceroyl phosphate + ADP. Its pathway is carbohydrate degradation; glycolysis; pyruvate from D-glyceraldehyde 3-phosphate: step 2/5. This Haloarcula marismortui (strain ATCC 43049 / DSM 3752 / JCM 8966 / VKM B-1809) (Halobacterium marismortui) protein is Phosphoglycerate kinase.